The primary structure comprises 387 residues: Succinate--CoA ligase [ADP-forming] subunit beta (387 aa).

Positions Lys9 to Lys236 constitute an ATP-grasp domain. Residues Lys45, Gly52 to Gly54, Ser94, and Glu99 each bind ATP. Residues Asn191 and Asp205 each contribute to the Mg(2+) site. Substrate-binding positions include Asn256 and Gly318–Thr320.

Belongs to the succinate/malate CoA ligase beta subunit family. As to quaternary structure, heterotetramer of two alpha and two beta subunits. The cofactor is Mg(2+).

It catalyses the reaction succinate + ATP + CoA = succinyl-CoA + ADP + phosphate. It carries out the reaction GTP + succinate + CoA = succinyl-CoA + GDP + phosphate. The protein operates within carbohydrate metabolism; tricarboxylic acid cycle; succinate from succinyl-CoA (ligase route): step 1/1. Succinyl-CoA synthetase functions in the citric acid cycle (TCA), coupling the hydrolysis of succinyl-CoA to the synthesis of either ATP or GTP and thus represents the only step of substrate-level phosphorylation in the TCA. The beta subunit provides nucleotide specificity of the enzyme and binds the substrate succinate, while the binding sites for coenzyme A and phosphate are found in the alpha subunit. The sequence is that of Succinate--CoA ligase [ADP-forming] subunit beta from Mycolicibacterium gilvum (strain PYR-GCK) (Mycobacterium gilvum (strain PYR-GCK)).